The primary structure comprises 734 residues: MASRFPKFSQGLAQDPTTRRIWFGIATAHHFESHDDITEERLYHKIFASHFGQLAIIFLWTSGNLFHVAWQGNFEAWVRDPLHVRPIAHAIWDPHFGQPAIEAFTRGGAPGPVNIAYSGVYQWWYTIGLRTNEDLYAGALFLLFLSVIFLIAGRLHLQPKWRPSVSWFKNAESRLNHHLSGLFGVSSLAWTGHLVHVAIPESRGVHVRWDNFLDVLPHPEGLEPLFTGQWNLYAQNPDSSSHLFGTSQGAGTAILTFLGGFHPQTQSLWLTDMAHHHLAIALVFSIAGHMYRTNFGIGHSMEDILEAHVPPGGLLGRGHKGLYNTINNSLHFQLGLALASLGVITSLVAQHMYSLPPYAFIAQDFTTQAALYTHHQYIAGFIMTGAFAHGAIFLIRDYNPEQNKDNVLARMLEQKEAIISHLSWVSLLLGFHTLGLYVHNDVMLAFGTPEKQILIEPIFAQWIQSAHGKTLYGFDILLSSTSGPSFDAGKSIWLPGWLNAINDNNNSLFSTIGPGDFLVHHAIALGLHTTTLILVKGALDARGSRLMPDKKDFGYSFPCDGPGRGGTCDISAWDAFYLAVFWMLNTIGWVTFYWHWKHITLWQGNVAQFNESSTYLMGWSRDYLWLNSSQLINGYNPFGMNSLSVWAWMFLFGHLVWATGFMFLISWRGYWQELIETLAWAHERTPLANLVRWRDKPVALSIVQARLVGLAHFSVGYIFTYAAFLIASTSGKFG.

The next 8 helical transmembrane spans lie at Ile46–Ala69, Leu135–Gln158, Leu175–Ile199, Met273–Tyr291, Leu330–Tyr353, Ala369–Ile395, Ala417–His439, and Phe517–Val535. Cys559 and Cys568 together coordinate [4Fe-4S] cluster. 2 helical membrane-spanning segments follow: residues Ala575–Trp596 and Leu643–Ile665. Positions 654, 662, and 670 each coordinate chlorophyll a. Residue Trp671 participates in phylloquinone binding. Residues Leu707–Ala727 traverse the membrane as a helical segment.

This sequence belongs to the PsaA/PsaB family. In terms of assembly, the PsaA/B heterodimer binds the P700 chlorophyll special pair and subsequent electron acceptors. PSI consists of a core antenna complex that captures photons, and an electron transfer chain that converts photonic excitation into a charge separation. The eukaryotic PSI reaction center is composed of at least 11 subunits. Requires P700 is a chlorophyll a/chlorophyll a' dimer, A0 is one or more chlorophyll a, A1 is one or both phylloquinones and FX is a shared 4Fe-4S iron-sulfur center. as cofactor.

The protein localises to the plastid. The protein resides in the chloroplast thylakoid membrane. It carries out the reaction reduced [plastocyanin] + hnu + oxidized [2Fe-2S]-[ferredoxin] = oxidized [plastocyanin] + reduced [2Fe-2S]-[ferredoxin]. Functionally, psaA and PsaB bind P700, the primary electron donor of photosystem I (PSI), as well as the electron acceptors A0, A1 and FX. PSI is a plastocyanin-ferredoxin oxidoreductase, converting photonic excitation into a charge separation, which transfers an electron from the donor P700 chlorophyll pair to the spectroscopically characterized acceptors A0, A1, FX, FA and FB in turn. Oxidized P700 is reduced on the lumenal side of the thylakoid membrane by plastocyanin. The chain is Photosystem I P700 chlorophyll a apoprotein A2 from Pinus thunbergii (Japanese black pine).